Reading from the N-terminus, the 196-residue chain is Probable GTP-binding protein EngB (196 aa).

Residues 22 to 194 enclose the EngB-type G domain; that stretch reads DKKEIAFAGR…LKTIGEILGD (173 aa). GTP-binding positions include 30–37, 56–60, 74–77, 141–144, and 173–175; these read GRSNVGKS, GKTRS, DLPG, TKSD, and FSS. Residues serine 37 and threonine 58 each contribute to the Mg(2+) site.

It belongs to the TRAFAC class TrmE-Era-EngA-EngB-Septin-like GTPase superfamily. EngB GTPase family. Mg(2+) serves as cofactor.

Necessary for normal cell division and for the maintenance of normal septation. The protein is Probable GTP-binding protein EngB of Petrotoga mobilis (strain DSM 10674 / SJ95).